The primary structure comprises 846 residues: MAVKRLIETFVPENYKIFLDIDRKTKKIKGQVAITGEAKDTVVAFHAKGLHFNKVRAFSVDTNFIENEEDEEIVVKIGETGRVTVSFEYEAELTDNMMGIYPSYYEVNGEKKMLIGTQFESHFARQAFPSIDEPEAKATFDLSVKFDEEEGDIIVSNMPELLNINGIHVFERTVKMSSYLLAFVFGELQYKKGKTKSGVEVGAFATKAHSQAALDFPLDIAIRSIEFYEDYYQTPYPLPHSWHIALPDFSSGAMENWGCITYREVCMLVDPENATIQSKQYVATVIAHELAHQWFGDLVTMQWWDDLWLNESFANNMEYVCMDALEPSWNVWESFSISEANMALNRDATDGVQSVHVEVTHPDEIGTLFDPAIVYAKGSRLMVMLRKWLGDEDFAAGLALYFKRHQYGNTVGDNLWDALAEVSGKDVAAFMHSWVNQPGYPVVTAEVVDDTLILSQKQFFVGEGVDKGRLWNVPLNTNWTGLPDLLSSEKVEIPGFAALKTKNNGKALFLNDANMAHYIIDYKGALLTDLLSEVESLENVTKFQILQDRKLLAKAGVISYADVVNILPSFTNEESYLVNTGLSQLISELELFVDEDSETEKAFQSLVGKLFAKNYARLGWDKVAGESAGDESLRGIVLSKTLYSENADAKTKASQIFATHKENLASIPADIRPIVLNNEIKTTNSAELVKTYRETYIKTSLQEFKRELEGAVALIKDEKVIAELLESFKNADIVKPQDIAFSWFYLLRNDFSQDAAWAWEKANWASLEEKLGGDMSYDKFVIYPGNTFKTADKLAEYKAFFEPKLENQGLKRSIEMAIKQITARVALIDSQKAAVDKAITDIAEKL.

Substrate-binding positions include E120 and 252–256 (GAMEN). H288 is a binding site for Zn(2+). E289 acts as the Proton acceptor in catalysis. Residues H292 and E311 each contribute to the Zn(2+) site.

This sequence belongs to the peptidase M1 family. Monomer. Zn(2+) serves as cofactor.

The protein localises to the cytoplasm. It catalyses the reaction Release of an N-terminal amino acid, Xaa-|-Yaa- from a peptide, amide or arylamide. Xaa is preferably Ala, but may be most amino acids including Pro (slow action). When a terminal hydrophobic residue is followed by a prolyl residue, the two may be released as an intact Xaa-Pro dipeptide.. Aminopeptidase with broad substrate specificity to several peptides. It has more affinity for oligopeptides than for dipeptides. It plays an essential role in the metabolism, it may be involved in nitrogen supply or protein turnover. This is Aminopeptidase N (pepN) from Lactococcus lactis subsp. cremoris (Streptococcus cremoris).